We begin with the raw amino-acid sequence, 377 residues long: N5-carboxyaminoimidazole ribonucleotide synthase (377 aa).

Residues R93, K133, 138-144, 175-178, E183, H206, and 257-258 contribute to the ATP site; these read GYDGKGQ, EEFV, and NE. Residues 97 to 287 enclose the ATP-grasp domain; that stretch reads KALLDNAGVR…QFENHLRAVC (191 aa).

It belongs to the PurK/PurT family. In terms of assembly, homodimer.

It carries out the reaction 5-amino-1-(5-phospho-beta-D-ribosyl)imidazole + hydrogencarbonate + ATP = 5-carboxyamino-1-(5-phospho-D-ribosyl)imidazole + ADP + phosphate + 2 H(+). It participates in purine metabolism; IMP biosynthesis via de novo pathway; 5-amino-1-(5-phospho-D-ribosyl)imidazole-4-carboxylate from 5-amino-1-(5-phospho-D-ribosyl)imidazole (N5-CAIR route): step 1/2. Catalyzes the ATP-dependent conversion of 5-aminoimidazole ribonucleotide (AIR) and HCO(3)(-) to N5-carboxyaminoimidazole ribonucleotide (N5-CAIR). The sequence is that of N5-carboxyaminoimidazole ribonucleotide synthase from Vibrio parahaemolyticus serotype O3:K6 (strain RIMD 2210633).